A 2079-amino-acid chain; its full sequence is von Willebrand factor A domain-containing protein DDB_G0286969 (2079 aa).

One can recognise a VIT domain in the interval 11-147 (EQILPSFISI…ELEIIITYST (137 aa)). Positions 178–203 (NENSTTNTNTQTQPQSVNTTTTTTPS) are disordered. The span at 180–203 (NSTTNTNTQTQPQSVNTTTTTTPS) shows a compositional bias: low complexity. The VWFA domain occupies 354–525 (ELIFLVDVSE…KVMRQLKRAL (172 aa)). Disordered regions lie at residues 761 to 800 (PTTL…LKTP), 832 to 866 (PFVP…TEVK), 956 to 1139 (AKPV…TKPT), 1155 to 1203 (NEPA…VSST), and 1239 to 1294 (DSNT…ADAE). 3 stretches are compositionally biased toward low complexity: residues 785-800 (TTQQ…LKTP), 841-866 (PTTT…TEVK), and 956-973 (AKPV…QQTK). Residues 923–957 (EMIKIAEAKAAAEQKAAAEQKAIADAKAAAEQAAK) are a coiled coil. Positions 974 to 989 (PKADKQSKQNAKDNKQ) are enriched in basic and acidic residues. Residues 992 to 1006 (KPVVVEQKPPVVTET) are compositionally biased toward low complexity. Over residues 1007–1021 (KPTVATESATPTKPT) the composition is skewed to polar residues. Positions 1023–1061 (AQAAAAAAAAAQQAAQQAAATTPVKQQPTKQTTPNKSTP) are enriched in low complexity. Basic and acidic residues predominate over residues 1092–1111 (KPVETKPVEQTKPVETKPVE). Low complexity predominate over residues 1176 to 1198 (NNNNNNNNNNNNNNNNNNNNNNN). Residues 1239–1272 (DSNTKAPDSLKTTPIFSNGPQGISPSSGNGSNKS) show a composition bias toward polar residues. Basic and acidic residues predominate over residues 1280 to 1292 (DRGGRGGRDRNAD). Residues 1317–1527 (LKKFKFNLNR…LDLIDLRANK (211 aa)) enclose the MIF4G domain. The disordered stretch occupies residues 1530–1755 (PKNSTQTKTK…PAPVEPVKPK (226 aa)). Composition is skewed to basic and acidic residues over residues 1538-1550 (TKKD…ERFI), 1557-1599 (QKRE…RDAP), and 1621-1634 (NNRD…DRSG). Composition is skewed to low complexity over residues 1635 to 1659 (GKQS…LFGS) and 1688 to 1699 (SSSIPSIPNRSN). The segment covering 1725 to 1740 (SNDRDSRGPSKPDNRK) has biased composition (basic and acidic residues). An MI domain is found at 1760 to 1882 (KIEDDISMTL…PLNYLEEAYA (123 aa)).

The sequence is that of von Willebrand factor A domain-containing protein DDB_G0286969 from Dictyostelium discoideum (Social amoeba).